Consider the following 912-residue polypeptide: Non-lysosomal glucosylceramidase (912 aa).

The segment at 886-912 (HKKNSSRPAVTQGTAPSQPECGPKRSL) is disordered. The span at 891–902 (SRPAVTQGTAPS) shows a compositional bias: polar residues.

This sequence belongs to the non-lysosomal glucosylceramidase family.

It is found in the endoplasmic reticulum membrane. The protein resides in the golgi apparatus membrane. The enzyme catalyses a beta-D-glucosyl-(1&lt;-&gt;1')-N-acylsphing-4-enine + H2O = an N-acylsphing-4-enine + D-glucose. It catalyses the reaction a beta-D-galactosyl-(1&lt;-&gt;1')-N-acylsphing-4-enine + H2O = an N-acylsphing-4-enine + D-galactose. It carries out the reaction beta-D-glucosyl-(1-&gt;3)-O-lithocholate + H2O = lithocholate + D-glucose. The catalysed reaction is beta-D-glucosyl-(1-&gt;3)-O-chenodeoxycholate + H2O = chenodeoxycholate + D-glucose. The enzyme catalyses a di-trans,poly-cis-dolichyl beta-D-glucosyl phosphate + chenodeoxycholate = beta-D-glucosyl-(1-&gt;3)-O-chenodeoxycholate + a di-trans,poly-cis-dolichyl phosphate + H(+). It catalyses the reaction octyl beta-D-glucose + chenodeoxycholate = beta-D-glucosyl-(1-&gt;3)-O-chenodeoxycholate + octan-1-ol. It carries out the reaction cholesteryl 3-beta-D-glucoside + H2O = cholesterol + D-glucose. The catalysed reaction is a beta-D-glucosyl-(1&lt;-&gt;1')-N-acylsphing-4-enine + cholesterol = cholesteryl 3-beta-D-glucoside + an N-acylsphing-4-enine. The enzyme catalyses beta-D-glucosyl-N-(9Z-octadecenoyl)-sphing-4E-enine + cholesterol = N-(9Z-octadecenoyl)-sphing-4-enine + cholesteryl 3-beta-D-glucoside. It catalyses the reaction a beta-D-galactosyl-(1&lt;-&gt;1')-N-acylsphing-4-enine + cholesterol = cholesteryl 3-beta-D-galactoside + an N-acylsphing-4-enine. It carries out the reaction 1-(beta-D-galactosyl)-N-dodecanoylsphing-4-enine + cholesterol = cholesteryl 3-beta-D-galactoside + N-dodecanoylsphing-4-enine. The protein operates within lipid metabolism; sphingolipid metabolism. Its pathway is steroid metabolism; cholesterol metabolism. Its activity is regulated as follows. Enzymatic activity is dependent on membrane association and requires the presence of lipids. Functionally, non-lysosomal glucosylceramidase that catalyzes the hydrolysis of glucosylceramides/GlcCers (such as beta-D-glucosyl-(1&lt;-&gt;1')-N-acylsphing-4-enine) to free glucose and ceramides (such as N-acylsphing-4-enine). GlcCers are membrane glycosphingolipids that have a wide intracellular distribution. They are the main precursors of more complex glycosphingolipids that play a role in cellular growth, differentiation, adhesion, signaling, cytoskeletal dynamics and membrane properties. Involved in the transglucosylation of cholesterol, transfers glucose from GlcCer to cholesterol, thereby modifying its water solubility and biological properties. Under specific conditions, may catalyze the reverse reaction, transferring glucose from cholesteryl-3-beta-D-glucoside to ceramide (such as N-acylsphing-4-enine). May play a role in the metabolism of bile acids. Able to hydrolyze bile acid 3-O-glucosides as well as to produce bile acid-glucose conjugates thanks to a bile acid glucosyl transferase activity. Catalyzes the hydrolysis of galactosylceramides/GalCers (such as beta-D-galactosyl-(1&lt;-&gt;1')-N-acylsphing-4-enine), as well as the galactosyl transfer between GalCers and cholesterol in vitro with lower activity compared with their activity against GlcCers. The sequence is that of Non-lysosomal glucosylceramidase from Rattus norvegicus (Rat).